Here is a 420-residue protein sequence, read N- to C-terminus: Tol-Pal system protein TolB (420 aa).

The first 21 residues, 1-21 (MKLFVHLVLFISLFIPYFTKA), serve as a signal peptide directing secretion.

Belongs to the TolB family. In terms of assembly, the Tol-Pal system is composed of five core proteins: the inner membrane proteins TolA, TolQ and TolR, the periplasmic protein TolB and the outer membrane protein Pal. They form a network linking the inner and outer membranes and the peptidoglycan layer.

The protein localises to the periplasm. Its function is as follows. Part of the Tol-Pal system, which plays a role in outer membrane invagination during cell division and is important for maintaining outer membrane integrity. The chain is Tol-Pal system protein TolB from Wolbachia sp. subsp. Drosophila simulans (strain wRi).